A 562-amino-acid polypeptide reads, in one-letter code: Protein FAM222B (562 aa).

Composition is skewed to low complexity over residues 155 to 167 (QQAL…LAHA) and 183 to 201 (ALSH…HPQP). Disordered stretches follow at residues 155-203 (QQAL…QPMA), 219-245 (LQHP…VTVS), and 537-562 (AHRA…PGYR).

This sequence belongs to the FAM222 family.

This is Protein FAM222B (FAM222B) from Homo sapiens (Human).